Reading from the N-terminus, the 157-residue chain is MSRRHAAEKKVVPADPIYGSVTLERFINKVMMHGKKSIARKIVYSALERFAKKVGAENALEAFEEALENAKPLLEVRSRRVGGATYQVPVEVAAGRRDCLAMQWIIKFARAKPGKSMEVGLATELVDCFNKQGATIKKREDTHRMAEANKAFAHYKW.

This sequence belongs to the universal ribosomal protein uS7 family. As to quaternary structure, part of the 30S ribosomal subunit. Contacts proteins S9 and S11.

Functionally, one of the primary rRNA binding proteins, it binds directly to 16S rRNA where it nucleates assembly of the head domain of the 30S subunit. Is located at the subunit interface close to the decoding center, probably blocks exit of the E-site tRNA. In Chlamydia felis (strain Fe/C-56) (Chlamydophila felis), this protein is Small ribosomal subunit protein uS7.